A 607-amino-acid chain; its full sequence is UvrABC system protein C (607 aa).

The GIY-YIG domain occupies glycine 16–isoleucine 94. A UVR domain is found at asparagine 203–valine 238.

Belongs to the UvrC family. Interacts with UvrB in an incision complex.

It localises to the cytoplasm. In terms of biological role, the UvrABC repair system catalyzes the recognition and processing of DNA lesions. UvrC both incises the 5' and 3' sides of the lesion. The N-terminal half is responsible for the 3' incision and the C-terminal half is responsible for the 5' incision. This Ectopseudomonas mendocina (strain ymp) (Pseudomonas mendocina) protein is UvrABC system protein C.